The following is a 382-amino-acid chain: ATP phosphoribosyltransferase regulatory subunit (382 aa).

Belongs to the class-II aminoacyl-tRNA synthetase family. HisZ subfamily. As to quaternary structure, heteromultimer composed of HisG and HisZ subunits.

It localises to the cytoplasm. The protein operates within amino-acid biosynthesis; L-histidine biosynthesis; L-histidine from 5-phospho-alpha-D-ribose 1-diphosphate: step 1/9. In terms of biological role, required for the first step of histidine biosynthesis. May allow the feedback regulation of ATP phosphoribosyltransferase activity by histidine. The protein is ATP phosphoribosyltransferase regulatory subunit of Burkholderia pseudomallei (strain 1106a).